The following is a 262-amino-acid chain: 3-methyl-2-oxobutanoate hydroxymethyltransferase (262 aa).

Asp42 and Asp81 together coordinate Mg(2+). 3-methyl-2-oxobutanoate is bound by residues 42 to 43 (DS), Asp81, and Lys110. Glu112 serves as a coordination point for Mg(2+). The Proton acceptor role is filled by Glu180.

The protein belongs to the PanB family. In terms of assembly, homodecamer; pentamer of dimers. Requires Mg(2+) as cofactor.

It localises to the cytoplasm. It carries out the reaction 3-methyl-2-oxobutanoate + (6R)-5,10-methylene-5,6,7,8-tetrahydrofolate + H2O = 2-dehydropantoate + (6S)-5,6,7,8-tetrahydrofolate. Its pathway is cofactor biosynthesis; (R)-pantothenate biosynthesis; (R)-pantoate from 3-methyl-2-oxobutanoate: step 1/2. In terms of biological role, catalyzes the reversible reaction in which hydroxymethyl group from 5,10-methylenetetrahydrofolate is transferred onto alpha-ketoisovalerate to form ketopantoate. The polypeptide is 3-methyl-2-oxobutanoate hydroxymethyltransferase (Legionella pneumophila (strain Corby)).